Here is a 132-residue protein sequence, read N- to C-terminus: Pro-MCH 2 (132 aa).

The N-terminal stretch at 1–24 is a signal peptide; that stretch reads MRDSVLSVIFALALFLECYTPSMA. A disulfide bridge connects residues C120 and C129.

The protein belongs to the melanin-concentrating hormone family. In terms of tissue distribution, pituitary gland. Produced in neurons of lateral basal hypothalamus which project both to the brain and to the neural lobe of the pituitary gland from where MCH is released.

In terms of biological role, plays a role in skin pigmentation by antagonizing the action of melanotropin alpha. Induces melanin concentration within the melanophores. May participate in the control of the hypothalamo-pituitary adrenal gland axis by inhibiting the release of ACTH. In Oncorhynchus keta (Chum salmon), this protein is Pro-MCH 2 (mch2).